Reading from the N-terminus, the 390-residue chain is Lipoyl synthase, mitochondrial (390 aa).

The N-terminal 19 residues, 1–19 (MPTLLRILRPPRSPFTRCL), are a transit peptide targeting the mitochondrion. The disordered stretch occupies residues 23–48 (ATPSSSGSSSRSKFTESLETGPGLDD). 7 residues coordinate [4Fe-4S] cluster: cysteine 98, cysteine 103, cysteine 109, cysteine 136, cysteine 140, cysteine 143, and serine 350. The region spanning 119 to 339 (AEGRSAATAT…KEVAENLGFL (221 aa)) is the Radical SAM core domain.

The protein belongs to the radical SAM superfamily. Lipoyl synthase family. [4Fe-4S] cluster serves as cofactor.

It is found in the mitochondrion. It carries out the reaction [[Fe-S] cluster scaffold protein carrying a second [4Fe-4S](2+) cluster] + N(6)-octanoyl-L-lysyl-[protein] + 2 oxidized [2Fe-2S]-[ferredoxin] + 2 S-adenosyl-L-methionine + 4 H(+) = [[Fe-S] cluster scaffold protein] + N(6)-[(R)-dihydrolipoyl]-L-lysyl-[protein] + 4 Fe(3+) + 2 hydrogen sulfide + 2 5'-deoxyadenosine + 2 L-methionine + 2 reduced [2Fe-2S]-[ferredoxin]. Its pathway is protein modification; protein lipoylation via endogenous pathway; protein N(6)-(lipoyl)lysine from octanoyl-[acyl-carrier-protein]: step 2/2. Its function is as follows. Catalyzes the radical-mediated insertion of two sulfur atoms into the C-6 and C-8 positions of the octanoyl moiety bound to the lipoyl domains of lipoate-dependent enzymes, thereby converting the octanoylated domains into lipoylated derivatives. The protein is Lipoyl synthase, mitochondrial of Laccaria bicolor (strain S238N-H82 / ATCC MYA-4686) (Bicoloured deceiver).